The primary structure comprises 91 residues: ATP-dependent Clp protease adapter protein ClpS (91 aa).

It belongs to the ClpS family. In terms of assembly, binds to the N-terminal domain of the chaperone ClpA.

Its function is as follows. Involved in the modulation of the specificity of the ClpAP-mediated ATP-dependent protein degradation. The protein is ATP-dependent Clp protease adapter protein ClpS of Synechococcus sp. (strain ATCC 27144 / PCC 6301 / SAUG 1402/1) (Anacystis nidulans).